The sequence spans 188 residues: Peptidyl-tRNA hydrolase (188 aa).

Position 14 (Tyr-14) interacts with tRNA. The Proton acceptor role is filled by His-19. Tyr-64, Asn-66, and Asn-113 together coordinate tRNA.

It belongs to the PTH family. As to quaternary structure, monomer.

Its subcellular location is the cytoplasm. It carries out the reaction an N-acyl-L-alpha-aminoacyl-tRNA + H2O = an N-acyl-L-amino acid + a tRNA + H(+). Its function is as follows. Hydrolyzes ribosome-free peptidyl-tRNAs (with 1 or more amino acids incorporated), which drop off the ribosome during protein synthesis, or as a result of ribosome stalling. Catalyzes the release of premature peptidyl moieties from peptidyl-tRNA molecules trapped in stalled 50S ribosomal subunits, and thus maintains levels of free tRNAs and 50S ribosomes. This chain is Peptidyl-tRNA hydrolase, found in Chloroflexus aggregans (strain MD-66 / DSM 9485).